We begin with the raw amino-acid sequence, 700 residues long: Lutropin-choriogonadotropic hormone receptor (700 aa).

The first 26 residues, 1 to 26, serve as a signal peptide directing secretion; that stretch reads MGRRVPALRQLLVLAMLVLKQSQLHS. The Extracellular segment spans residues 27-362; it reads PELSGSRCPE…AFNPCEDIMG (336 aa). One copy of the LRR 1 repeat lies at 52–75; the sequence is RAGLARLSLTYLPVKVIPSQAFRG. The N-linked (GlcNAc...) asparagine glycan is linked to Asn-103. LRR repeat units lie at residues 126 to 150, 176 to 200, and 225 to 248; these read LPRL…KISS, MNNE…AFNG, and ATGP…GLES. N-linked (GlcNAc...) asparagine glycans are attached at residues Asn-178 and Asn-199. Asn-295, Asn-303, and Asn-317 each carry an N-linked (GlcNAc...) asparagine glycan. A Sulfotyrosine modification is found at Tyr-335. The helical transmembrane segment at 363 to 390 threads the bilayer; that stretch reads YAFLRVLIWLINILAIFGNLTVLFVLLT. At 391–399 the chain is on the cytoplasmic side; sequence SRYKLTVPR. A helical membrane pass occupies residues 400-422; that stretch reads FLMCNLSFADFCMGLYLLLIASV. Topologically, residues 423–443 are extracellular; that stretch reads DSQTKGQYYNHAIDWQTGSGC. Cys-443 and Cys-518 are oxidised to a cystine. Residues 444–466 form a helical membrane-spanning segment; that stretch reads SAAGFFTVFASELSVYTLTVITL. Topologically, residues 467 to 486 are cytoplasmic; it reads ERWHTITYAVQLDQKLRLRH. The helical transmembrane segment at 487-509 threads the bilayer; it reads AIPIMLGGWIFSTLMATLPLVGV. Residues 510 to 529 lie on the Extracellular side of the membrane; sequence SSYMKVSICLPMDVESTLSQ. Residues 530 to 551 form a helical membrane-spanning segment; that stretch reads VYILSILLLNAVAFVVICACYV. Over 552–574 the chain is Cytoplasmic; sequence RIYFAVQNPELTAPNKDTKIAKK. Residues 575 to 598 traverse the membrane as a helical segment; that stretch reads MAILIFTDFTCMAPISFFAISAAF. At 599-609 the chain is on the extracellular side; sequence KVPLITVTNSK. A helical membrane pass occupies residues 610–631; the sequence is VLLVLFYPVNSCANPFLYAVFT. Over 632–700 the chain is Cytoplasmic; it reads KAFQRDFFLL…QPTPPRVLIQ (69 aa). 2 S-palmitoyl cysteine lipidation sites follow: Cys-647 and Cys-648.

It belongs to the G-protein coupled receptor 1 family. FSH/LSH/TSH subfamily. Post-translationally, sulfated.

It localises to the cell membrane. Receptor for lutropin-choriogonadotropic hormone. The activity of this receptor is mediated by G proteins which activate adenylate cyclase. This chain is Lutropin-choriogonadotropic hormone receptor (Lhcgr), found in Mus musculus (Mouse).